The sequence spans 168 residues: Cyclic pyranopterin monophosphate synthase (168 aa).

Residues 75 to 77 and 115 to 116 contribute to the substrate site; these read MCH and ME. Asp-130 is a catalytic residue.

It belongs to the MoaC family. In terms of assembly, homohexamer; trimer of dimers.

The catalysed reaction is (8S)-3',8-cyclo-7,8-dihydroguanosine 5'-triphosphate = cyclic pyranopterin phosphate + diphosphate. It functions in the pathway cofactor biosynthesis; molybdopterin biosynthesis. In terms of biological role, catalyzes the conversion of (8S)-3',8-cyclo-7,8-dihydroguanosine 5'-triphosphate to cyclic pyranopterin monophosphate (cPMP). In Bacillus licheniformis (strain ATCC 14580 / DSM 13 / JCM 2505 / CCUG 7422 / NBRC 12200 / NCIMB 9375 / NCTC 10341 / NRRL NRS-1264 / Gibson 46), this protein is Cyclic pyranopterin monophosphate synthase.